Consider the following 424-residue polypeptide: Hemagglutinin-esterase (424 aa).

The first 16 residues, Met1–Ser16, serve as a signal peptide directing secretion. Positions Phe7–Gly127 are esterase domain 1. The Virion surface segment spans residues Leu17 to Ile392. Ser40 (nucleophile) is an active-site residue. Cys44 and Cys65 are joined by a disulfide. N-linked (GlcNAc...) asparagine; by host glycans are attached at residues Asn54, Asn89, Asn153, Asn236, and Asn301. Cystine bridges form between Cys113–Cys162, Cys197–Cys276, and Cys205–Cys249. Residues Leu128–Leu266 are receptor binding. The interval Leu267–Thr379 is esterase domain 2. An intrachain disulfide couples Cys307 to Cys312. N-linked (GlcNAc...) asparagine; by host glycosylation occurs at Asn316. Active-site charge relay system residues include Asp326 and His329. Residues Cys347 and Cys371 are joined by a disulfide bond. The N-linked (GlcNAc...) asparagine; by host glycan is linked to Asn358. The chain crosses the membrane as a helical span at residues Ile393–Phe413. The Intravirion segment spans residues Met414–Ala424. Residue Asn417 is glycosylated (N-linked (GlcNAc...) asparagine; by host).

It belongs to the influenza type C/coronaviruses hemagglutinin-esterase family. As to quaternary structure, homodimer; disulfide-linked. Forms a complex with the M protein in the pre-Golgi. Associates then with S-M complex to form a ternary complex S-M-HE. Post-translationally, N-glycosylated in the RER. In terms of processing, N-glycosylated in the host RER.

The protein resides in the virion membrane. It localises to the host cell membrane. It carries out the reaction N-acetyl-9-O-acetylneuraminate + H2O = N-acetylneuraminate + acetate + H(+). It catalyses the reaction N-acetyl-4-O-acetylneuraminate + H2O = N-acetylneuraminate + acetate + H(+). Its function is as follows. Structural protein that makes short spikes at the surface of the virus. Contains receptor binding and receptor-destroying activities. Mediates de-O-acetylation of N-acetyl-4-O-acetylneuraminic acid, which is probably the receptor determinant recognized by the virus on the surface of erythrocytes and susceptible cells. This receptor-destroying activity is important for virus release as it probably helps preventing self-aggregation and ensures the efficient spread of the progeny virus from cell to cell. May serve as a secondary viral attachment protein for initiating infection, the spike protein being the major one. May become a target for both the humoral and the cellular branches of the immune system. This Bovine coronavirus (strain 98TXSF-110-ENT) (BCoV-ENT) protein is Hemagglutinin-esterase.